The following is a 63-amino-acid chain: MKIAEIRGMTPDQLADTLISLKKEQFNLRFQAATGQVEKTHRVNEIRKDIARIKTVLRAKAAA.

Belongs to the universal ribosomal protein uL29 family.

The polypeptide is Large ribosomal subunit protein uL29 (Caulobacter vibrioides (strain ATCC 19089 / CIP 103742 / CB 15) (Caulobacter crescentus)).